The following is a 135-amino-acid chain: Cytochrome b-c1 complex subunit 6, mitochondrial (135 aa).

The tract at residues 1–70 is disordered; sequence MSFFRDLLES…ETADPLDTLR (70 aa). Residues 19-64 show a composition bias toward acidic residues; it reads EPVEDVEVEQPEDAPEEEVSEETVEEEEDDDEDDDEDDEEEEETAD.

This sequence belongs to the UQCRH/QCR6 family. Component of the ubiquinol-cytochrome c oxidoreductase (cytochrome b-c1 complex, complex III, CIII), a multisubunit enzyme composed of 10 subunits. The complex is composed of 3 respiratory subunits cytochrome b (COB), cytochrome c1 (CYT1) and Rieske protein (RIP1), 2 core protein subunits COR1 and QCR2, and 5 low-molecular weight protein subunits QCR6, QCR7, QCR8, QCR9 and QCR10. The complex exists as an obligatory dimer and forms supercomplexes (SCs) in the inner mitochondrial membrane with a monomer or a dimer of cytochrome c oxidase (complex IV, CIV), resulting in 2 different assemblies (supercomplexes III(2)IV and III(2)IV(2)).

It is found in the mitochondrion inner membrane. Functionally, component of the ubiquinol-cytochrome c oxidoreductase, a multisubunit transmembrane complex that is part of the mitochondrial electron transport chain which drives oxidative phosphorylation. The complex plays an important role in the uptake of multiple carbon sources present in different host niches. In Candida albicans (strain SC5314 / ATCC MYA-2876) (Yeast), this protein is Cytochrome b-c1 complex subunit 6, mitochondrial.